The chain runs to 222 residues: Beta-casein (222 aa).

An N-terminal signal peptide occupies residues Met-1 to Ala-15. Thr-27 is modified (phosphothreonine). Ser-30, Ser-32, Ser-33, and Ser-34 each carry phosphoserine.

This sequence belongs to the beta-casein family. Mammary gland specific. Secreted in milk.

It is found in the secreted. In terms of biological role, important role in determination of the surface properties of the casein micelles. This chain is Beta-casein (CSN2), found in Ovis aries (Sheep).